The primary structure comprises 163 residues: Norbelladine synthase (163 aa).

Tyrosine 68–glutamate 71 is a tyramine binding site. Lysine 83 (proton donor) is an active-site residue.

The protein belongs to the BetVI family. In terms of tissue distribution, mostly expressed in bulbs, and, to a lower extent, in roots, stems, leaves and flowers.

It carries out the reaction 3,4-dihydroxybenzaldehyde + tyramine + AH2 = norbelladine + A + H2O. It functions in the pathway alkaloid biosynthesis. Its function is as follows. Catalyzes the condensation of tyramine and 3,4-dihydroxybenzaldehyde (3,4-DHBA) to form norbelladine, the common precursor to all Amaryllidaceae alkaloids such as galanthamine, lycorine and haemanthamine, and including haemanthamine- and crinamine-type alkaloids, promising anticancer agents. This chain is Norbelladine synthase, found in Narcissus pseudonarcissus (Daffodil).